Consider the following 88-residue polypeptide: Small ribosomal subunit protein bS20 (88 aa).

2 disordered regions span residues 1-29 (MANT…SKLR) and 69-88 (KNTA…AMAA).

It belongs to the bacterial ribosomal protein bS20 family.

Binds directly to 16S ribosomal RNA. The protein is Small ribosomal subunit protein bS20 of Polynucleobacter asymbioticus (strain DSM 18221 / CIP 109841 / QLW-P1DMWA-1) (Polynucleobacter necessarius subsp. asymbioticus).